The primary structure comprises 235 residues: Pyridoxine 5'-phosphate synthase (235 aa).

N6 contributes to the 3-amino-2-oxopropyl phosphate binding site. Residue D8–H9 coordinates 1-deoxy-D-xylulose 5-phosphate. A 3-amino-2-oxopropyl phosphate-binding site is contributed by R17. The Proton acceptor role is filled by H42. Residues R44 and H49 each contribute to the 1-deoxy-D-xylulose 5-phosphate site. E69 serves as the catalytic Proton acceptor. A 1-deoxy-D-xylulose 5-phosphate-binding site is contributed by T99. H189 serves as the catalytic Proton donor. Residues G190 and G211–H212 each bind 3-amino-2-oxopropyl phosphate.

It belongs to the PNP synthase family. As to quaternary structure, homooctamer; tetramer of dimers.

The protein resides in the cytoplasm. The catalysed reaction is 3-amino-2-oxopropyl phosphate + 1-deoxy-D-xylulose 5-phosphate = pyridoxine 5'-phosphate + phosphate + 2 H2O + H(+). The protein operates within cofactor biosynthesis; pyridoxine 5'-phosphate biosynthesis; pyridoxine 5'-phosphate from D-erythrose 4-phosphate: step 5/5. In terms of biological role, catalyzes the complicated ring closure reaction between the two acyclic compounds 1-deoxy-D-xylulose-5-phosphate (DXP) and 3-amino-2-oxopropyl phosphate (1-amino-acetone-3-phosphate or AAP) to form pyridoxine 5'-phosphate (PNP) and inorganic phosphate. This is Pyridoxine 5'-phosphate synthase from Chlorobium luteolum (strain DSM 273 / BCRC 81028 / 2530) (Pelodictyon luteolum).